The following is a 77-amino-acid chain: MNVKILTLVIVLVVSLLCSASAGPMASTEHSKEIEEVGSMRTPLRQNPARAGRSQRPAGWRRRRPRPRLSHKGPMPF.

The N-terminal stretch at 1-22 (MNVKILTLVIVLVVSLLCSASA) is a signal peptide. The disordered stretch occupies residues 21–77 (SAGPMASTEHSKEIEEVGSMRTPLRQNPARAGRSQRPAGWRRRRPRPRLSHKGPMPF). Residues 59–71 (GWRRRRPRPRLSH) are compositionally biased toward basic residues.

This sequence belongs to the apelin family.

It localises to the secreted. It is found in the extracellular space. Peptide hormone that functions as endogenous ligand for the G-protein-coupled apelin receptor (aplnra and/or aplnrb), that plays a role in cadiovascular homeostasis. Functions as a balanced agonist activating both G(i) protein pathway and beta-arrestin pathway of APLNR. Downstream G proteins activation, apelin can inhibit cAMP production and activate key intracellular effectors such as ERKs. On the other hand, APLNR activation induces beta-arrestin recruitment to the membrane leading to desensitization and internalization of the receptor. Apelin blunts cardiac hypertrophic induction from APLNR on response to pathological stimuli, but also induces myocardial hypertrophy under normal conditions. Involved in the regulation of cardiac precursor cell movements during gastrulation and heart morphogenesis. Plays a role in early coronary blood vessels formation. Mediates myocardial contractility in an ERK1/2-dependent manner. May also have a role in the central control of body fluid homeostasis. The sequence is that of Apelin from Danio rerio (Zebrafish).